We begin with the raw amino-acid sequence, 435 residues long: MNAEDVKGFFASRESLDMEQYLVLDYYLESVGDIETALAHFCSEQSTAQWKRVGVDEDFRLVHAAKVIDYEVIEELEQLSYPVKHSETGKIHACRVTIAHPHCNFGPKIPNLLTAVCGEGTYFTPGVPVVKLMDIHFPDTYLADFEGPKFGIEGLRDILNAHGRPIFFGVVKPNIGLSPGEFAEIAYQSWLGGLDIAKDDEMLADVTWSSIEERAAHLGKARRKAEAETGEPKIYLANITDEVDSLMEKHDVAVRNGANALLINALPVGLSAVRMLSNYTQVPLIGHFPFIASFSRMEKYGIHSKVMTKLQRLAGLDAVIMPGFGDRMMTPEEEVLENVIECTKPMGRIKPCLPVPGGSDSALTLQTVYEKVGNVDFGFVPGRGVFGHPMGPKAGAKSIRQAWEAIEQGISIETWAETHPELQAMVDQSLLKKQD.

Mg(2+)-binding residues include lysine 198, aspartate 200, and glutamate 201. The residue at position 198 (lysine 198) is an N6-carboxylysine.

This sequence belongs to the RuBisCO large chain family. Type IV subfamily. As to quaternary structure, homodimer. The cofactor is Mg(2+).

Its function is as follows. May be involved in sulfur metabolism and oxidative stress response. Does not show RuBisCO activity. In Chlorobaculum tepidum (strain ATCC 49652 / DSM 12025 / NBRC 103806 / TLS) (Chlorobium tepidum), this protein is Ribulose bisphosphate carboxylase-like protein.